We begin with the raw amino-acid sequence, 722 residues long: D-(-)-3-hydroxybutyrate oligomer hydrolase (722 aa).

The span at 1-11 (MQQRHLSQSAH) shows a compositional bias: polar residues. Residues 1-20 (MQQRHLSQSAHSHGHGTRRA) form a disordered region. Residues 1-36 (MQQRHLSQSAHSHGHGTRRAHRRNTIAIAVATLAVA) form the signal peptide. Serine 327 (charge relay system) is an active-site residue. The disordered stretch occupies residues 671–697 (PPSQVVRTTPRGGADTDTVGPRIQPSN).

The protein belongs to the D-(-)-3-hydroxybutyrate oligomer hydrolase family.

It localises to the secreted. The enzyme catalyses (3R)-hydroxybutanoate dimer + H2O = 2 (R)-3-hydroxybutanoate + H(+). It participates in lipid metabolism; butanoate metabolism. Its function is as follows. Participates in the degradation of poly-3-hydroxybutyrate (PHB). It works downstream of poly(3-hydroxybutyrate) depolymerase, hydrolyzing D(-)-3-hydroxybutyrate oligomers of various length (3HB-oligomers) into 3HB-monomers. The chain is D-(-)-3-hydroxybutyrate oligomer hydrolase from Cupriavidus metallidurans (strain ATCC 43123 / DSM 2839 / NBRC 102507 / CH34) (Ralstonia metallidurans).